The sequence spans 806 residues: U3 small nucleolar RNA-associated protein 17 (806 aa).

WD repeat units lie at residues 266 to 305 (WHAN…RQFL), 448 to 489 (RNGL…KTWV), 499 to 538 (GNLE…SAWK), and 598 to 635 (PHGG…VQWT).

Component of the ribosomal small subunit (SSU) processome.

The protein localises to the nucleus. Its subcellular location is the nucleolus. In terms of biological role, involved in nucleolar processing of pre-18S ribosomal RNA. Required for optimal pre-ribosomal RNA transcription by RNA polymerase I together with a subset of U3 proteins required for transcription (t-UTPs). The sequence is that of U3 small nucleolar RNA-associated protein 17 (utp17) from Schizosaccharomyces pombe (strain 972 / ATCC 24843) (Fission yeast).